The primary structure comprises 378 residues: Erythronate-4-phosphate dehydrogenase (378 aa).

2 residues coordinate substrate: serine 45 and threonine 66. NAD(+) is bound by residues aspartate 146 and threonine 175. Residue arginine 208 is part of the active site. Aspartate 232 serves as a coordination point for NAD(+). The active site involves glutamate 237. Histidine 254 functions as the Proton donor in the catalytic mechanism. Glycine 257 lines the NAD(+) pocket. Tyrosine 258 provides a ligand contact to substrate.

This sequence belongs to the D-isomer specific 2-hydroxyacid dehydrogenase family. PdxB subfamily. As to quaternary structure, homodimer.

It localises to the cytoplasm. The catalysed reaction is 4-phospho-D-erythronate + NAD(+) = (R)-3-hydroxy-2-oxo-4-phosphooxybutanoate + NADH + H(+). It participates in cofactor biosynthesis; pyridoxine 5'-phosphate biosynthesis; pyridoxine 5'-phosphate from D-erythrose 4-phosphate: step 2/5. Functionally, catalyzes the oxidation of erythronate-4-phosphate to 3-hydroxy-2-oxo-4-phosphonooxybutanoate. This is Erythronate-4-phosphate dehydrogenase from Escherichia coli (strain ATCC 8739 / DSM 1576 / NBRC 3972 / NCIMB 8545 / WDCM 00012 / Crooks).